The chain runs to 444 residues: Protein EVI2B (444 aa).

Residues 1-23 (MEFKYLVFIVLCQYLDNTFFSET) form the signal peptide. Residues 24–203 (EAITTEQQSL…GTAHKNNHNA (180 aa)) are Extracellular-facing. Residues Asn-63, Asn-94, Asn-104, and Asn-127 are each glycosylated (N-linked (GlcNAc...) asparagine). Composition is skewed to polar residues over residues 104–131 (NNSLPQTSPSGFTLTNQPSPSTYNSTGQ) and 160–171 (THNQPTKSTPTI). A disordered region spans residues 104–197 (NNSLPQTSPS…EPPSGKGTAH (94 aa)). The segment covering 177 to 187 (TPPPPPPPLTS) has biased composition (pro residues). Residues 204-224 (IAAILIGTIIISMLVAILMII) form a helical membrane-spanning segment. The Cytoplasmic segment spans residues 225–444 (LWKYLRKPVL…SLPPPPTELL (220 aa)). Phosphothreonine is present on Thr-250. Phosphoserine is present on residues Ser-269, Ser-272, Ser-279, and Ser-295. Composition is skewed to polar residues over residues 318-332 (SEDSADGSTVGTAVS) and 361-370 (SPLPNDSINP). Disordered regions lie at residues 318-337 (SEDSADGSTVGTAVSSDDAD) and 361-444 (SPLP…TELL).

As to expression, expressed in myeloid and lymphoid progenitors and increased in mature hematopoietic populations with the highest levels in granulocytes.

Its subcellular location is the membrane. Required for granulocyte differentiation and functionality of hematopoietic progenitor cells through the control of cell cycle progression and survival of hematopoietic progenitor cells. The polypeptide is Protein EVI2B (Mus musculus (Mouse)).